Here is a 506-residue protein sequence, read N- to C-terminus: Glutamate--tRNA ligase (506 aa).

Residues 9 to 19 carry the 'HIGH' region motif; that stretch reads PSPTGFQHIGG. Residues 251–255 carry the 'KMSKS' region motif; it reads KLSKR. Residue lysine 254 participates in ATP binding.

Belongs to the class-I aminoacyl-tRNA synthetase family. Glutamate--tRNA ligase type 1 subfamily. As to quaternary structure, monomer.

It is found in the cytoplasm. The enzyme catalyses tRNA(Glu) + L-glutamate + ATP = L-glutamyl-tRNA(Glu) + AMP + diphosphate. In terms of biological role, catalyzes the attachment of glutamate to tRNA(Glu) in a two-step reaction: glutamate is first activated by ATP to form Glu-AMP and then transferred to the acceptor end of tRNA(Glu). The sequence is that of Glutamate--tRNA ligase from Treponema denticola (strain ATCC 35405 / DSM 14222 / CIP 103919 / JCM 8153 / KCTC 15104).